The chain runs to 313 residues: Ribosomal RNA small subunit methyltransferase H (313 aa).

S-adenosyl-L-methionine is bound by residues 35-37 (GGH), Asp55, Phe79, Asp101, and Gln108.

The protein belongs to the methyltransferase superfamily. RsmH family.

The protein resides in the cytoplasm. The catalysed reaction is cytidine(1402) in 16S rRNA + S-adenosyl-L-methionine = N(4)-methylcytidine(1402) in 16S rRNA + S-adenosyl-L-homocysteine + H(+). Its function is as follows. Specifically methylates the N4 position of cytidine in position 1402 (C1402) of 16S rRNA. The protein is Ribosomal RNA small subunit methyltransferase H of Enterobacter sp. (strain 638).